An 874-amino-acid polypeptide reads, in one-letter code: Alanine--tRNA ligase (874 aa).

Zn(2+) is bound by residues H564, H568, C665, and H669.

The protein belongs to the class-II aminoacyl-tRNA synthetase family. The cofactor is Zn(2+).

The protein localises to the cytoplasm. The catalysed reaction is tRNA(Ala) + L-alanine + ATP = L-alanyl-tRNA(Ala) + AMP + diphosphate. Catalyzes the attachment of alanine to tRNA(Ala) in a two-step reaction: alanine is first activated by ATP to form Ala-AMP and then transferred to the acceptor end of tRNA(Ala). Also edits incorrectly charged Ser-tRNA(Ala) and Gly-tRNA(Ala) via its editing domain. The polypeptide is Alanine--tRNA ligase (Delftia acidovorans (strain DSM 14801 / SPH-1)).